Reading from the N-terminus, the 352-residue chain is Nodal homolog 4-B (352 aa).

The signal sequence occupies residues 1–18 (MHLYFSCFILLFVPGGKS). A propeptide spanning residues 19–278 (LGINSHLKHM…TIANSRRHRR (260 aa)) is cleaved from the precursor. Residues Asn30, Asn37, Asn199, and Asn238 are each glycosylated (N-linked (GlcNAc...) asparagine). Positions 197–223 (GKNHSEGHMKQPKKLHRAKSAERRYQQ) are disordered.

This sequence belongs to the TGF-beta family. As to quaternary structure, homodimer; disulfide-linked.

The protein localises to the secreted. Functionally, cooperation and regulatory loops of multiple nodals are essential for mesendoderm patterning in early embryos. Plays a role in mesoderm formation and may be required for neural development. In Xenopus laevis (African clawed frog), this protein is Nodal homolog 4-B (nodal4-b).